A 502-amino-acid chain; its full sequence is Maturase K (502 aa).

It belongs to the intron maturase 2 family. MatK subfamily.

Its subcellular location is the plastid. The protein resides in the chloroplast. Its function is as follows. Usually encoded in the trnK tRNA gene intron. Probably assists in splicing its own and other chloroplast group II introns. Binds its homologous trnK precursor transcript. In Sinapis alba (White mustard), this protein is Maturase K.